A 134-amino-acid chain; its full sequence is uncharacterized protein (134 aa).

This is an uncharacterized protein from Acanthamoeba polyphaga (Amoeba).